The following is a 279-amino-acid chain: tRNA dimethylallyltransferase (279 aa).

ATP is bound at residue 10–17; sequence GPTASGKS. 12 to 17 lines the substrate pocket; it reads TASGKS.

This sequence belongs to the IPP transferase family. Monomer. It depends on Mg(2+) as a cofactor.

The enzyme catalyses adenosine(37) in tRNA + dimethylallyl diphosphate = N(6)-dimethylallyladenosine(37) in tRNA + diphosphate. Functionally, catalyzes the transfer of a dimethylallyl group onto the adenine at position 37 in tRNAs that read codons beginning with uridine, leading to the formation of N6-(dimethylallyl)adenosine (i(6)A). The chain is tRNA dimethylallyltransferase from Roseobacter denitrificans (strain ATCC 33942 / OCh 114) (Erythrobacter sp. (strain OCh 114)).